The sequence spans 102 residues: Large ribosomal subunit protein bL21 (102 aa).

The protein belongs to the bacterial ribosomal protein bL21 family. Part of the 50S ribosomal subunit. Contacts protein L20.

In terms of biological role, this protein binds to 23S rRNA in the presence of protein L20. The polypeptide is Large ribosomal subunit protein bL21 (Geobacillus sp. (strain WCH70)).